The primary structure comprises 289 residues: Phosphatidylinositol:ceramide inositolphosphotransferase 3 (289 aa).

A run of 5 helical transmembrane segments spans residues 33 to 53 (LVLAGLVFQYIHGLAAHGVHY), 77 to 97 (AFFSETVFVTIFGSFILWTFH), 115 to 135 (VFVYLAASQSLRIITFFATQL), 169 to 189 (VIYGCGDLIFSSHTIFTLVFV), and 199 to 219 (RWIKHLAWLMAVIQSILIIAS). The active site involves His181. Residues His222 and Asp226 contribute to the active site. The chain crosses the membrane as a helical span at residues 223–243 (YTVDIVVAWYTVNLVMFYVDS). The segment at 249–289 (AERSSGPSPTPLLPLSTKDSKNKSKEDHQRLLNENNVADDH) is disordered. The segment covering 266–279 (KDSKNKSKEDHQRL) has biased composition (basic and acidic residues). The span at 280-289 (LNENNVADDH) shows a compositional bias: polar residues.

It belongs to the sphingomyelin synthase family. Mostly expressed in stems and flowers, and, to a lower extent, in leaves, roots and siliques.

It is found in the membrane. Its function is as follows. Catalyzes the transfer of the phosphorylinositol group from phosphatidylinositol (PI) to phytoceramide, an essential step in sphingolipid biosynthesis. This is Phosphatidylinositol:ceramide inositolphosphotransferase 3 (IPCS3) from Arabidopsis thaliana (Mouse-ear cress).